The primary structure comprises 201 residues: UPF0301 protein Atu0781 (201 aa).

It belongs to the UPF0301 (AlgH) family.

The chain is UPF0301 protein Atu0781 from Agrobacterium fabrum (strain C58 / ATCC 33970) (Agrobacterium tumefaciens (strain C58)).